Consider the following 572-residue polypeptide: MARILITSAIPYINGIKHLGNLVGSQLPADLYARYMRGRGHEVMFICATDEHGTPAELAAAKAGKPVEDYCAEMHEVQKEIAAGFRLSFDHFGRSSSARNHRLTQHFAGALAENGFIEEVVERQFFSVADNRFLPDRYIEGTCPNCGYDKARGDQCENCTKQLDPTDLIDPRSAISGSTELELRETKHLYLRQRALKDEIEAWIDSKTDWPVLTTSIAKKWLHDGEGLQDRGITRDLKWGVPVRKGSEPWPGMEGKVFYVWFDAPIEYIAGTAEWADANGKADADWERWWRTDRGAEDVRYVQFMGKDNVPFHTLSFPATIMGSREPWKLVDYIKSFNYLNYDGGQFSTSQGRGVFMDQALSILPADYWRWWLLSHAPENSDSEFTWENFQSSVNKDLADVLGNLVSRVTKFCRSKFGETVPAGGSPGEREHQLVAELQQQLAAYETCMEAMEVRKAAAELRALWVAGNEYLQSAAPWTVVKTDPEQAQAMIRLALNLIRLYAVISRPFIPDAAASMMASLGCEDWSWPADVGRALEVLPPGHGFTTPEVLFRKITDEERAEWQTRFSGVRT.

The 'HIGH' region motif lies at Pro11–Asn21. Positions 143, 146, 156, and 159 each coordinate Zn(2+). The short motif at Gln346 to Ser350 is the 'KMSKS' region element. Thr349 is an ATP binding site.

This sequence belongs to the class-I aminoacyl-tRNA synthetase family. MetG type 1 subfamily. In terms of assembly, monomer. Requires Zn(2+) as cofactor.

The protein resides in the cytoplasm. It catalyses the reaction tRNA(Met) + L-methionine + ATP = L-methionyl-tRNA(Met) + AMP + diphosphate. Is required not only for elongation of protein synthesis but also for the initiation of all mRNA translation through initiator tRNA(fMet) aminoacylation. This is Methionine--tRNA ligase from Cereibacter sphaeroides (strain KD131 / KCTC 12085) (Rhodobacter sphaeroides).